The sequence spans 114 residues: NADH-ubiquinone oxidoreductase chain 3 (114 aa).

Helical transmembrane passes span A3–L23, F54–F74, and I85–W105.

Belongs to the complex I subunit 3 family.

The protein resides in the mitochondrion membrane. The enzyme catalyses a ubiquinone + NADH + 5 H(+)(in) = a ubiquinol + NAD(+) + 4 H(+)(out). Core subunit of the mitochondrial membrane respiratory chain NADH dehydrogenase (Complex I) that is believed to belong to the minimal assembly required for catalysis. Complex I functions in the transfer of electrons from NADH to the respiratory chain. The immediate electron acceptor for the enzyme is believed to be ubiquinone. This chain is NADH-ubiquinone oxidoreductase chain 3 (mt-nd3), found in Xenopus laevis (African clawed frog).